The chain runs to 117 residues: SPbeta prophage-derived uncharacterized protein YosL (117 aa).

In Bacillus subtilis (strain 168), this protein is SPbeta prophage-derived uncharacterized protein YosL (yosL).